The following is a 64-amino-acid chain: UPF0337 protein SH2043 (64 aa).

Positions 1 to 64 (MAEDKFEQAK…DKVKGNNDNK (64 aa)) are disordered. Over residues 22 to 64 (DNKDLEKEGQNDKASGKAKEAVENVKNKANDLIDKVKGNNDNK) the composition is skewed to basic and acidic residues.

Belongs to the UPF0337 (CsbD) family.

This is UPF0337 protein SH2043 from Staphylococcus haemolyticus (strain JCSC1435).